A 336-amino-acid polypeptide reads, in one-letter code: 4-hydroxy-3-methylbut-2-enyl diphosphate reductase (336 aa).

Cys-21 contacts [4Fe-4S] cluster. (2E)-4-hydroxy-3-methylbut-2-enyl diphosphate contacts are provided by His-50 and His-86. Dimethylallyl diphosphate contacts are provided by His-50 and His-86. Isopentenyl diphosphate-binding residues include His-50 and His-86. A [4Fe-4S] cluster-binding site is contributed by Cys-108. Position 136 (His-136) interacts with (2E)-4-hydroxy-3-methylbut-2-enyl diphosphate. His-136 lines the dimethylallyl diphosphate pocket. His-136 contacts isopentenyl diphosphate. Glu-138 serves as the catalytic Proton donor. Position 177 (Thr-177) interacts with (2E)-4-hydroxy-3-methylbut-2-enyl diphosphate. [4Fe-4S] cluster is bound at residue Cys-207. (2E)-4-hydroxy-3-methylbut-2-enyl diphosphate-binding residues include Ser-235, Ser-236, Asn-237, and Ser-280. Dimethylallyl diphosphate is bound by residues Ser-235, Ser-236, Asn-237, and Ser-280. The isopentenyl diphosphate site is built by Ser-235, Ser-236, Asn-237, and Ser-280.

This sequence belongs to the IspH family. [4Fe-4S] cluster is required as a cofactor.

The enzyme catalyses isopentenyl diphosphate + 2 oxidized [2Fe-2S]-[ferredoxin] + H2O = (2E)-4-hydroxy-3-methylbut-2-enyl diphosphate + 2 reduced [2Fe-2S]-[ferredoxin] + 2 H(+). The catalysed reaction is dimethylallyl diphosphate + 2 oxidized [2Fe-2S]-[ferredoxin] + H2O = (2E)-4-hydroxy-3-methylbut-2-enyl diphosphate + 2 reduced [2Fe-2S]-[ferredoxin] + 2 H(+). Its pathway is isoprenoid biosynthesis; dimethylallyl diphosphate biosynthesis; dimethylallyl diphosphate from (2E)-4-hydroxy-3-methylbutenyl diphosphate: step 1/1. It participates in isoprenoid biosynthesis; isopentenyl diphosphate biosynthesis via DXP pathway; isopentenyl diphosphate from 1-deoxy-D-xylulose 5-phosphate: step 6/6. Functionally, catalyzes the conversion of 1-hydroxy-2-methyl-2-(E)-butenyl 4-diphosphate (HMBPP) into a mixture of isopentenyl diphosphate (IPP) and dimethylallyl diphosphate (DMAPP). Acts in the terminal step of the DOXP/MEP pathway for isoprenoid precursor biosynthesis. This Mesorhizobium japonicum (strain LMG 29417 / CECT 9101 / MAFF 303099) (Mesorhizobium loti (strain MAFF 303099)) protein is 4-hydroxy-3-methylbut-2-enyl diphosphate reductase.